The following is a 719-amino-acid chain: Transcription factor E4F1 (719 aa).

A required for ubiquitin ligase activity region spans residues 20-63; that stretch reads NIITIQTTLGDEDEDIHKCGKCLAEFSALDAFIQHKLSRSCKRT. The disordered stretch occupies residues 59-125; it reads SCKRTQDPQT…SEDESSSPSK (67 aa). A compositionally biased stretch (basic and acidic residues) spans 98–109; sequence EKQDAKVASGDK. The interval 128–207 is mediates dimerization and DNA-binding; the sequence is WKLNTEGRYV…GLAFRESGAL (80 aa). 2 C2H2-type zinc fingers span residues 136-158 and 164-186; these read YVCDICAKTFKTTNILRTHMFTH and FVCEMCETAFRTKGSLIRHKRRH. A C2H2-type 3; degenerate zinc finger spans residues 192–216; it reads YRCNQCGLAFRESGALTRHLKSLTP. C2H2-type zinc fingers lie at residues 365–387, 393–415, 421–443, 449–471, and 477–499; these read YKCPHCERMFKTLNYLRVHVKGH, FKCLTCQKEFLTGYVLKKHMETH, YKCGECGKQFKAIGHVREHMRAH, YHCSFCDKSYKTKNALQVHHRTH, and YVCQHCSRGFREKSALVRHIRHH. A C2H2-type 9; degenerate zinc finger spans residues 505 to 527; the sequence is FKCSKCGRGFAEHGTLNRHLRAK.

The protein resides in the nucleus. It localises to the nucleoplasm. The protein localises to the cytoplasm. It carries out the reaction S-ubiquitinyl-[E2 ubiquitin-conjugating enzyme]-L-cysteine + [acceptor protein]-L-lysine = [E2 ubiquitin-conjugating enzyme]-L-cysteine + N(6)-ubiquitinyl-[acceptor protein]-L-lysine.. It functions in the pathway protein modification; protein ubiquitination. Its function is as follows. May function as a transcriptional repressor. May also function as a ubiquitin ligase. Functions in cell survival and proliferation through control of the cell cycle. The polypeptide is Transcription factor E4F1 (e4f1) (Danio rerio (Zebrafish)).